The following is a 210-amino-acid chain: Imidazole glycerol phosphate synthase subunit HisH (210 aa).

Residues 1-210 enclose the Glutamine amidotransferase type-1 domain; the sequence is MIAILDYGMG…KLLENFIRFI (210 aa). Cysteine 79 functions as the Nucleophile in the catalytic mechanism. Active-site residues include histidine 191 and glutamate 193.

As to quaternary structure, heterodimer of HisH and HisF.

The protein resides in the cytoplasm. It carries out the reaction 5-[(5-phospho-1-deoxy-D-ribulos-1-ylimino)methylamino]-1-(5-phospho-beta-D-ribosyl)imidazole-4-carboxamide + L-glutamine = D-erythro-1-(imidazol-4-yl)glycerol 3-phosphate + 5-amino-1-(5-phospho-beta-D-ribosyl)imidazole-4-carboxamide + L-glutamate + H(+). The catalysed reaction is L-glutamine + H2O = L-glutamate + NH4(+). The protein operates within amino-acid biosynthesis; L-histidine biosynthesis; L-histidine from 5-phospho-alpha-D-ribose 1-diphosphate: step 5/9. IGPS catalyzes the conversion of PRFAR and glutamine to IGP, AICAR and glutamate. The HisH subunit catalyzes the hydrolysis of glutamine to glutamate and ammonia as part of the synthesis of IGP and AICAR. The resulting ammonia molecule is channeled to the active site of HisF. The protein is Imidazole glycerol phosphate synthase subunit HisH of Leptospira interrogans serogroup Icterohaemorrhagiae serovar copenhageni (strain Fiocruz L1-130).